Here is a 345-residue protein sequence, read N- to C-terminus: OVARIAN TUMOR DOMAIN-containing deubiquitinating enzyme 9 (345 aa).

Residues Leu204 to Glu328 form the OTU domain. Residue Asp212 is part of the active site. The active-site Nucleophile is the Cys215. The active site involves His321.

The protein belongs to the peptidase C85 family.

It catalyses the reaction Thiol-dependent hydrolysis of ester, thioester, amide, peptide and isopeptide bonds formed by the C-terminal Gly of ubiquitin (a 76-residue protein attached to proteins as an intracellular targeting signal).. In terms of biological role, hydrolase that can remove conjugated ubiquitin from proteins in vitro and may therefore play an important regulatory role at the level of protein turnover by preventing degradation. Cysteine protease with a preference for 'Lys-63' and 'Lys-48' -linked ubiquitin (UB) tetramers as substrates. Also cleaves RUB-GST fusion. The chain is OVARIAN TUMOR DOMAIN-containing deubiquitinating enzyme 9 from Arabidopsis thaliana (Mouse-ear cress).